A 192-amino-acid polypeptide reads, in one-letter code: MIFCEKCRYSFNITKDVKSVQVGGKVNIALNNLFGKFNKNQQIVESDLTKLKVTDVLYDERFENMTKKDKKKMMSLIKSVNKSFFQEVGGQGELNTNKAYFICKYCKNYRPIEAGTTIYTKNYDTTDNSDIENYSFYIHDHTLQRTKNYICKNKDCKTHQNDNLKEAVLAKNSADQLVYVCTACTTHWINSI.

The protein localises to the virion. This is an uncharacterized protein from Acanthamoeba polyphaga mimivirus (APMV).